Here is a 294-residue protein sequence, read N- to C-terminus: tRNA dimethylallyltransferase (294 aa).

10-17 (GPTAVGKT) is an ATP binding site. Substrate is bound at residue 12 to 17 (TAVGKT). Positions 35-38 (DSQQ) are interaction with substrate tRNA.

This sequence belongs to the IPP transferase family. In terms of assembly, monomer. It depends on Mg(2+) as a cofactor.

It carries out the reaction adenosine(37) in tRNA + dimethylallyl diphosphate = N(6)-dimethylallyladenosine(37) in tRNA + diphosphate. In terms of biological role, catalyzes the transfer of a dimethylallyl group onto the adenine at position 37 in tRNAs that read codons beginning with uridine, leading to the formation of N6-(dimethylallyl)adenosine (i(6)A). This Streptococcus pneumoniae (strain ATCC 700669 / Spain 23F-1) protein is tRNA dimethylallyltransferase.